Here is a 53-residue protein sequence, read N- to C-terminus: Cytochrome c oxidase subunit 7e (53 aa).

Slime mold cytochrome c oxidase consists of at least seven different polypeptides species, subunits I, II, III, IV, V, VI, and VIIe/s in order of MW.

Its subcellular location is the mitochondrion inner membrane. The catalysed reaction is 4 Fe(II)-[cytochrome c] + O2 + 8 H(+)(in) = 4 Fe(III)-[cytochrome c] + 2 H2O + 4 H(+)(out). Its function is as follows. This protein is one of the nuclear-coded polypeptide chains of cytochrome c oxidase, the terminal oxidase in mitochondrial electron transport. The protein is Cytochrome c oxidase subunit 7e (cxgE) of Dictyostelium discoideum (Social amoeba).